A 309-amino-acid polypeptide reads, in one-letter code: Peptide methionine sulfoxide reductase MsrA/MsrB (309 aa).

A peptide methionine sulfoxide reductase A region spans residues 1–153 (MIYLAEGCFW…PNGYCHIDIN (153 aa)). C8 is a catalytic residue. The 124-residue stretch at 170 to 293 (ATEIKAKLSA…NSLSITFIPK (124 aa)) folds into the MsrB domain. C282 functions as the Nucleophile in the catalytic mechanism.

The protein in the N-terminal section; belongs to the MsrA Met sulfoxide reductase family. This sequence in the C-terminal section; belongs to the MsrB Met sulfoxide reductase family.

It catalyses the reaction L-methionyl-[protein] + [thioredoxin]-disulfide + H2O = L-methionyl-(S)-S-oxide-[protein] + [thioredoxin]-dithiol. It carries out the reaction [thioredoxin]-disulfide + L-methionine + H2O = L-methionine (S)-S-oxide + [thioredoxin]-dithiol. The catalysed reaction is L-methionyl-[protein] + [thioredoxin]-disulfide + H2O = L-methionyl-(R)-S-oxide-[protein] + [thioredoxin]-dithiol. Has an important function as a repair enzyme for proteins that have been inactivated by oxidation. Catalyzes the reversible oxidation-reduction of methionine sulfoxide in proteins to methionine. The protein is Peptide methionine sulfoxide reductase MsrA/MsrB (msrAB) of Streptococcus pyogenes serotype M3 (strain ATCC BAA-595 / MGAS315).